A 377-amino-acid chain; its full sequence is Succinyl-diaminopimelate desuccinylase (377 aa).

H67 provides a ligand contact to Zn(2+). D69 is a catalytic residue. A Zn(2+)-binding site is contributed by D100. Residue E134 is the Proton acceptor of the active site. Positions 135, 163, and 349 each coordinate Zn(2+).

Belongs to the peptidase M20A family. DapE subfamily. Homodimer. The cofactor is Zn(2+). It depends on Co(2+) as a cofactor.

The catalysed reaction is N-succinyl-(2S,6S)-2,6-diaminopimelate + H2O = (2S,6S)-2,6-diaminopimelate + succinate. Its pathway is amino-acid biosynthesis; L-lysine biosynthesis via DAP pathway; LL-2,6-diaminopimelate from (S)-tetrahydrodipicolinate (succinylase route): step 3/3. In terms of biological role, catalyzes the hydrolysis of N-succinyl-L,L-diaminopimelic acid (SDAP), forming succinate and LL-2,6-diaminopimelate (DAP), an intermediate involved in the bacterial biosynthesis of lysine and meso-diaminopimelic acid, an essential component of bacterial cell walls. The sequence is that of Succinyl-diaminopimelate desuccinylase from Glaesserella parasuis serovar 5 (strain SH0165) (Haemophilus parasuis).